The primary structure comprises 232 residues: Adenosylcobinamide-GDP ribazoletransferase (232 aa).

6 helical membrane passes run 32-52 (PIYF…GGSF), 54-74 (NFLL…LFHF), 102-122 (VGPF…TLYL), 126-146 (PITF…LMFF), 172-192 (FFLL…VVTV), and 212-232 (DVLG…LGVV).

The protein belongs to the CobS family. Requires Mg(2+) as cofactor.

It localises to the cell inner membrane. The catalysed reaction is alpha-ribazole + adenosylcob(III)inamide-GDP = adenosylcob(III)alamin + GMP + H(+). It carries out the reaction alpha-ribazole 5'-phosphate + adenosylcob(III)inamide-GDP = adenosylcob(III)alamin 5'-phosphate + GMP + H(+). The protein operates within cofactor biosynthesis; adenosylcobalamin biosynthesis; adenosylcobalamin from cob(II)yrinate a,c-diamide: step 7/7. Joins adenosylcobinamide-GDP and alpha-ribazole to generate adenosylcobalamin (Ado-cobalamin). Also synthesizes adenosylcobalamin 5'-phosphate from adenosylcobinamide-GDP and alpha-ribazole 5'-phosphate. The chain is Adenosylcobinamide-GDP ribazoletransferase from Thermosipho melanesiensis (strain DSM 12029 / CIP 104789 / BI429).